Consider the following 264-residue polypeptide: Major prion protein (264 aa).

Positions 1 to 24 (MVKRHIGSWILVLFVVMWSDVGLC) are cleaved as a signal peptide. Residues 25–241 (KKRPKPGGGW…ESQAYYQRGA (217 aa)) form an interaction with GRB2, ERI3 and SYN1 region. A disordered region spans residues 27-119 (RPKPGGGWNT…WNKPSKPKTN (93 aa)). A run of 6 repeats spans residues 54-62 (SQGGGGWGQ), 63-70 (PHGGGWGQ), 71-78 (PHGGGWGQ), 79-86 (PHGGGWGQ), 87-94 (PHGGGWGQ), and 95-103 (PHGGGGWGQ). Residues 54-103 (SQGGGGWGQPHGGGWGQPHGGGWGQPHGGGWGQPHGGGWGQPHGGGGWGQ) form a 6 X 8 AA tandem repeats of P-H-G-G-G-W-G-Q region. Gly residues predominate over residues 55-105 (QGGGGWGQPHGGGWGQPHGGGWGQPHGGGWGQPHGGGWGQPHGGGGWGQGG). Residues histidine 72, glycine 73, glycine 74, histidine 80, glycine 81, glycine 82, histidine 88, glycine 89, glycine 90, histidine 96, glycine 98, and glycine 99 each coordinate Cu(2+). The cysteines at positions 190 and 225 are disulfide-linked. 2 N-linked (GlcNAc...) asparagine glycosylation sites follow: asparagine 192 and asparagine 208. Alanine 241 carries GPI-anchor amidated alanine lipidation. Positions 242-264 (SVILFSSPPVILLISLLIFLIVG) are cleaved as a propeptide — removed in mature form.

This sequence belongs to the prion family. As to quaternary structure, monomer and homodimer. Has a tendency to aggregate into amyloid fibrils containing a cross-beta spine, formed by a steric zipper of superposed beta-strands. Soluble oligomers may represent an intermediate stage on the path to fibril formation. Copper binding may promote oligomerization. Interacts with GRB2, APP, ERI3/PRNPIP and SYN1. Mislocalized cytosolically exposed PrP interacts with MGRN1; this interaction alters MGRN1 subcellular location and causes lysosomal enlargement. Interacts with KIAA1191.

It localises to the cell membrane. Its subcellular location is the golgi apparatus. In terms of biological role, its primary physiological function is unclear. Has cytoprotective activity against internal or environmental stresses. May play a role in neuronal development and synaptic plasticity. May be required for neuronal myelin sheath maintenance. May play a role in iron uptake and iron homeostasis. Soluble oligomers are toxic to cultured neuroblastoma cells and induce apoptosis (in vitro). Association with GPC1 (via its heparan sulfate chains) targets PRNP to lipid rafts. Also provides Cu(2+) or Zn(2+) for the ascorbate-mediated GPC1 deaminase degradation of its heparan sulfate side chains. The chain is Major prion protein (PRNP) from Bubalus bubalis (Domestic water buffalo).